The sequence spans 725 residues: MSKHVFFVTCPKGVEYLLADELKEFGLNLVRNAPAGVWVEGELESGYRACLWSRLANRVILNVADVDARSADELYAGVVDLDWQAHIPAGGSFRVTFLGQNEAIRNTQFGAQKVKDGIVDSIRGAGAPRPSVAPKDPDVTVSARLNRGRLSLGIDLSGHSLHMRGYRTEKGIAPLKENLAAALLLRAGWPEIAANGGDFVDLMCGSGTLVVEAALMALDIAPGRKQERFGFEKWPGHQPELWLSLRQEAERRAHEGKQGRIPTFYGFDRDGRVIATAEKNILRAGLEGIVRVEARPISEFTRKNDWSDTGLVLTNPPYGERLSERKELAALYQSLGEVVARELIGWRLGVFTGAPEFGKSLGLRSFKQYKLFNGKLPAQLLLFEVQPENARTPRDPAAPGQIMPRIANAERADMLRNRLKKNLKTIGQWARKQNIGCYRLYDADMPEYALAIDIYEGRVHVQEYLAPKSVDEKAARERLAEAMAVIPEVLEVAPEDLVCKQRQRQTGTRQYEKQAATGEYFNVHEHGCALKVNLKDYLDTGLFLDHRPVRYWIQQHARGKRFLNLFCYTGAATVHAAVGGASRSLSLDMSKTYVGWAQDNLALNSADPRKHVVEQADCLAWLADRKTANQSFDLIFMDPPTFSNSARMAGVLDIQRDHADLVRQCMARLSSDGLLIFSNNFRKFRLDEALESEFEVKEVSASTLDKDFQRNPKIHRCWHIRHQNS.

The THUMP domain occupies 45-156; sequence SGYRACLWSR…RGRLSLGIDL (112 aa).

It belongs to the methyltransferase superfamily. RlmKL family.

The protein localises to the cytoplasm. It catalyses the reaction guanosine(2445) in 23S rRNA + S-adenosyl-L-methionine = N(2)-methylguanosine(2445) in 23S rRNA + S-adenosyl-L-homocysteine + H(+). It carries out the reaction guanosine(2069) in 23S rRNA + S-adenosyl-L-methionine = N(2)-methylguanosine(2069) in 23S rRNA + S-adenosyl-L-homocysteine + H(+). Specifically methylates the guanine in position 2445 (m2G2445) and the guanine in position 2069 (m7G2069) of 23S rRNA. This is Ribosomal RNA large subunit methyltransferase K/L from Marinobacter nauticus (strain ATCC 700491 / DSM 11845 / VT8) (Marinobacter aquaeolei).